The sequence spans 360 residues: tRNA N6-adenosine threonylcarbamoyltransferase (360 aa).

Residues His-115 and His-119 each coordinate Fe cation. Substrate contacts are provided by residues 137–141 (LVSGG), Asp-170, Gly-183, and Asn-283. Position 311 (Asp-311) interacts with Fe cation.

The protein belongs to the KAE1 / TsaD family. Fe(2+) is required as a cofactor.

It is found in the cytoplasm. It carries out the reaction L-threonylcarbamoyladenylate + adenosine(37) in tRNA = N(6)-L-threonylcarbamoyladenosine(37) in tRNA + AMP + H(+). Its function is as follows. Required for the formation of a threonylcarbamoyl group on adenosine at position 37 (t(6)A37) in tRNAs that read codons beginning with adenine. Is involved in the transfer of the threonylcarbamoyl moiety of threonylcarbamoyl-AMP (TC-AMP) to the N6 group of A37, together with TsaE and TsaB. TsaD likely plays a direct catalytic role in this reaction. This chain is tRNA N6-adenosine threonylcarbamoyltransferase, found in Sinorhizobium medicae (strain WSM419) (Ensifer medicae).